The chain runs to 495 residues: UDP-N-acetylmuramate--L-alanine ligase (495 aa).

An ATP-binding site is contributed by 120 to 126 (GSHGKTT).

This sequence belongs to the MurCDEF family.

It localises to the cytoplasm. The catalysed reaction is UDP-N-acetyl-alpha-D-muramate + L-alanine + ATP = UDP-N-acetyl-alpha-D-muramoyl-L-alanine + ADP + phosphate + H(+). It functions in the pathway cell wall biogenesis; peptidoglycan biosynthesis. Its function is as follows. Cell wall formation. The polypeptide is UDP-N-acetylmuramate--L-alanine ligase (Rickettsia prowazekii (strain Madrid E)).